We begin with the raw amino-acid sequence, 163 residues long: Protein VASCULATURE COMPLEXITY AND CONNECTIVITY (163 aa).

Positions 1 to 27 are cleaved as a signal peptide; sequence MTKIGGILVCLVIVGLDVAAAILGIQA. Helical transmembrane passes span 54 to 74, 95 to 115, and 133 to 153; these read LGLGAAAILVMAHVLLNLVGG, MACLVLTWIVFAVGFGSIVIG, and FLSIGGILCFLHALFCVAYYV.

The protein belongs to the DESIGUAL family. Interacts with OPS. In terms of tissue distribution, expressed in vascular cells, mostly in hypocotyls, and, to a lower extent, in seedlings, roots, flowers, siliques, developing leaves and inflorescences, but barely in mature leaves and seeds. High levels in leaf primordia.

Its subcellular location is the endoplasmic reticulum membrane. In terms of biological role, required, together with OPS, for embryo provasculature development and cotyledon vascular complexity and connectivity. Necessary, partially redundantly with DEAL2 and DEAL3, to ensure bilateral symmetry development and early leaf margin patterning, probably via the regulation of auxin and CUC2 distribution. Regulates cell proliferation but not cell expansion. The chain is Protein VASCULATURE COMPLEXITY AND CONNECTIVITY from Arabidopsis thaliana (Mouse-ear cress).